The primary structure comprises 183 residues: Nascent polypeptide-associated complex subunit beta (183 aa).

The NAC-A/B domain maps to 62–127; the sequence is GADDKKLQTT…GEEKELTELV (66 aa). The segment at 150 to 183 is disordered; sequence QNMQKQAGTEGKKDEDEDDIPDLVEGENFESNVE. Residues 164 to 183 show a composition bias toward acidic residues; it reads EDEDDIPDLVEGENFESNVE.

It belongs to the NAC-beta family. As to quaternary structure, part of the nascent polypeptide-associated complex (NAC), consisting of egd2 and egd1. NAC associates with ribosomes via egd1.

It localises to the cytoplasm. The protein localises to the nucleus. In terms of biological role, component of the nascent polypeptide-associated complex (NAC), a dynamic component of the ribosomal exit tunnel, protecting the emerging polypeptides from interaction with other cytoplasmic proteins to ensure appropriate nascent protein targeting. The NAC complex also promotes mitochondrial protein import by enhancing productive ribosome interactions with the outer mitochondrial membrane and blocks the inappropriate interaction of ribosomes translating non-secretory nascent polypeptides with translocation sites in the membrane of the endoplasmic reticulum. EGD1 may act as a transcription factor that exert a negative effect on the expression of several genes that are transcribed by RNA polymerase II. This Neosartorya fischeri (strain ATCC 1020 / DSM 3700 / CBS 544.65 / FGSC A1164 / JCM 1740 / NRRL 181 / WB 181) (Aspergillus fischerianus) protein is Nascent polypeptide-associated complex subunit beta (egd1).